A 158-amino-acid chain; its full sequence is Ribosome maturation factor RimP (158 aa).

The protein belongs to the RimP family.

The protein resides in the cytoplasm. Its function is as follows. Required for maturation of 30S ribosomal subunits. This chain is Ribosome maturation factor RimP, found in Pseudomonas savastanoi pv. phaseolicola (strain 1448A / Race 6) (Pseudomonas syringae pv. phaseolicola (strain 1448A / Race 6)).